Reading from the N-terminus, the 334-residue chain is Heat shock factor 2-binding protein (334 aa).

The tract at residues 14 to 51 (MGTKEEFVKVRKKDLERLTTEVMQIRDFLPRILNGEVL) is interaction with BRME1. Residues 49-122 (EVLESFQKLK…LLQQAEYCTE (74 aa)) are a coiled coil. The interaction with BRCA2 stretch occupies residues 83-334 (ARLETVQADN…EDLRTLEHNV (252 aa)).

Associates with HSF2. The interaction seems to occur between the trimerization domain of HSF2 and the N-terminal hydrophilic region of HSF2BP. Interacts (via C-terminus) with BNC1. Interacts (via N-terminus) with BRCA2 and BRME1; the interactions are direct and allow the formation of a ternary complex. The complex BRME1:HSF2BP:BRCA2 interacts with SPATA22, MEIOB and RAD51. Sumoylated by UBE2I in response to MEKK1-mediated stimuli. As to expression, testis specific. Overexpressed in some tumors.

It is found in the cytoplasm. The protein resides in the chromosome. In terms of biological role, meiotic recombination factor component of recombination bridges involved in meiotic double-strand break repair. Modulates the localization of recombinases DMC1:RAD51 to meiotic double-strand break (DSB) sites through the interaction with BRCA2 and its recruitment during meiotic recombination. Indispensable for the DSB repair, homologous synapsis, and crossover formation that are needed for progression past metaphase I, is essential for spermatogenesis and male fertility. Required for proper recombinase recruitment in female meiosis. Inhibits BNC1 transcriptional activity during spermatogenesis, probably by sequestering it in the cytoplasm. May be involved in modulating HSF2 activation in testis. This chain is Heat shock factor 2-binding protein, found in Homo sapiens (Human).